The following is a 328-amino-acid chain: MINIAIDAMGGDFGEKPIIEGVLKALEAKPFNAILVGNSKILKPLIPKKLEQYIQYEEASEIFSMNENATDALKNKETTIYKAINLLKEKKVDAVVSAGHSGASMSLATLRLGRLKGISRPAIATLMPNIINKTLLLDVGANTDCKAENLFQFAIMGEVYARAIMQIQKPRLALLSNGEEECKGNELTKESHQLMKKIPNFIGNAEGRDIFNGEIDVLVCDGFDGNVILKACEGVATAIFQLLKNEVKQSFISKIGALLMKPSFKKLKKHTDWQEYGGAPLLGVNGCVIISHGKSDSRAIKNAIFQAINFSQSHINELIENELGKYNA.

This sequence belongs to the PlsX family. As to quaternary structure, homodimer. Probably interacts with PlsY.

The protein localises to the cytoplasm. It catalyses the reaction a fatty acyl-[ACP] + phosphate = an acyl phosphate + holo-[ACP]. It participates in lipid metabolism; phospholipid metabolism. Its function is as follows. Catalyzes the reversible formation of acyl-phosphate (acyl-PO(4)) from acyl-[acyl-carrier-protein] (acyl-ACP). This enzyme utilizes acyl-ACP as fatty acyl donor, but not acyl-CoA. In Campylobacter jejuni subsp. jejuni serotype O:6 (strain 81116 / NCTC 11828), this protein is Phosphate acyltransferase.